A 241-amino-acid chain; its full sequence is Tubulin-like protein alpha-4B (241 aa).

Positions 1–10 (MRHQQTERQD) are enriched in basic and acidic residues. The segment at 1-20 (MRHQQTERQDPSQPLSRQHG) is disordered. Residue aspartate 10 participates in GTP binding. Aspartate 10 serves as a coordination point for Mg(2+). Positions 11–20 (PSQPLSRQHG) are enriched in polar residues. The GTP site is built by serine 79, glycine 83, threonine 84, threonine 118, asparagine 145, and asparagine 167. The active site involves glutamate 193.

The protein belongs to the tubulin family. Requires Mg(2+) as cofactor. Post-translationally, some glutamate residues at the C-terminus are polyglutamylated, resulting in polyglutamate chains on the gamma-carboxyl group. Polyglutamylation plays a key role in microtubule severing by spastin (SPAST). SPAST preferentially recognizes and acts on microtubules decorated with short polyglutamate tails: severing activity by SPAST increases as the number of glutamates per tubulin rises from one to eight, but decreases beyond this glutamylation threshold. Glutamylation is also involved in cilia motility. In terms of processing, some glutamate residues at the C-terminus are monoglycylated but not polyglycylated due to the absence of functional TTLL10 in human. Monoglycylation is mainly limited to tubulin incorporated into cilia and flagella axonemes, which is required for their stability and maintenance. Flagella glycylation controls sperm motility. Both polyglutamylation and monoglycylation can coexist on the same protein on adjacent residues, and lowering glycylation levels increases polyglutamylation, and reciprocally.

It localises to the cytoplasm. The protein localises to the cytoskeleton. The enzyme catalyses GTP + H2O = GDP + phosphate + H(+). Its function is as follows. Tubulin is the major constituent of microtubules, a cylinder consisting of laterally associated linear protofilaments composed ofalpha- and beta-tubulin heterodimers. This is Tubulin-like protein alpha-4B (TUBA4B) from Homo sapiens (Human).